Consider the following 324-residue polypeptide: Putative transport protein TM_1187 (324 aa).

8 consecutive transmembrane segments (helical) span residues 12 to 32 (LYLVLFLVLAKLSPFIITALI), 62 to 82 (ISNVLVFLTIAYSAVNFFPVI), 105 to 125 (IPGWLSSILSSISASFSEGAL), 131 to 151 (IVGYVPSFITAAILIVITAFI), 190 to 210 (GGQVLVAIFVGLFVGFGAFIF), 227 to 247 (FVPYLGVVISAIPLLMLAFSV), 252 to 272 (GLLIGTIILVAANQLEMWVLA), and 285 to 305 (FIILIMILILGDLFSFGGVLI).

This sequence belongs to the autoinducer-2 exporter (AI-2E) (TC 2.A.86) family.

The protein resides in the cell membrane. This chain is Putative transport protein TM_1187, found in Thermotoga maritima (strain ATCC 43589 / DSM 3109 / JCM 10099 / NBRC 100826 / MSB8).